The sequence spans 919 residues: GPI ethanolamine phosphate transferase 1 (919 aa).

Topologically, residues Met1–Leu9 are cytoplasmic. A helical membrane pass occupies residues Leu10–Ile30. At Ser31 to Thr457 the chain is on the lumenal side. N-linked (GlcNAc...) asparagine glycosylation is found at Asn90, Asn138, Asn198, Asn202, Asn286, and Asn312. The helical transmembrane segment at Ile458–Phe478 threads the bilayer. Residues Ile479–Lys488 lie on the Cytoplasmic side of the membrane. Residues Ala489–Phe509 traverse the membrane as a helical segment. Residues Tyr510 to His512 lie on the Lumenal side of the membrane. The helical transmembrane segment at Ser513 to Thr533 threads the bilayer. Residues Asn534–Lys553 are Cytoplasmic-facing. Residues Arg554 to His574 traverse the membrane as a helical segment. Residues Arg575–Trp576 lie on the Lumenal side of the membrane. A helical membrane pass occupies residues Thr577–Leu597. Ser598 is a topological domain (cytoplasmic). The chain crosses the membrane as a helical span at residues Val599–Val619. Over Lys620–Gln626 the chain is Lumenal. The helical transmembrane segment at Ile627–Ser647 threads the bilayer. Residues Arg648–Ala655 lie on the Cytoplasmic side of the membrane. The chain crosses the membrane as a helical span at residues Ile656 to Ile676. The Lumenal segment spans residues Ser677 to Glu687. The chain crosses the membrane as a helical span at residues Ser688 to Tyr708. Topologically, residues Arg709–Leu720 are cytoplasmic. A helical transmembrane segment spans residues Ile721–Phe741. Over Tyr742–Val776 the chain is Lumenal. Residues Ser777–Ile797 form a helical membrane-spanning segment. Over Ser798–Arg807 the chain is Cytoplasmic. Residues Leu808–Pro828 traverse the membrane as a helical segment. Over Tyr829 to Tyr848 the chain is Lumenal. Residues Thr849–Leu869 traverse the membrane as a helical segment. Residues Arg870–Tyr885 lie on the Cytoplasmic side of the membrane. A helical transmembrane segment spans residues Cys886–Leu906. At Lys907–Gln919 the chain is on the lumenal side.

This sequence belongs to the PIGG/PIGN/PIGO family. PIGN subfamily. Interacts with CSF1; CSF1 channels phosphatidylethanolamine to MCD4 in the endoplasmic reticulum at contact sites to support GPI anchor biosynthesis. N-glycosylated.

It localises to the endoplasmic reticulum membrane. The protein resides in the golgi apparatus membrane. Its subcellular location is the vacuole membrane. The protein operates within glycolipid biosynthesis; glycosylphosphatidylinositol-anchor biosynthesis. Ethanolamine phosphate transferase involved in glycosylphosphatidylinositol-anchor biosynthesis. Transfers ethanolamine phosphate to the first alpha-1,4-linked mannose of the glycosylphosphatidylinositol precursor of GPI-anchor. Ethanolamine phosphate on the alpha-1,4-linked mannose is essential for further mannosylation by GPI10 and is necessary for an efficient recognition of GPI lipids and GPI proteins by the GPI transamidase, for the efficient transport of GPI anchored proteins from endoplasmic reticulum to Golgi and for the physiological incorporation of ceramides into GPI anchors by lipid remodeling. Also involved in non-mitochondrial ATP movements across membrane and participates in Golgi and endoplasmic reticulum function, Also required for the incorporation of BGL2 into the cell wall. This chain is GPI ethanolamine phosphate transferase 1 (MCD4), found in Saccharomyces cerevisiae (strain ATCC 204508 / S288c) (Baker's yeast).